A 320-amino-acid polypeptide reads, in one-letter code: Protease HtpX homolog (320 aa).

2 helical membrane-spanning segments follow: residues 6-26 and 28-48; these read TAML…LIGG and AGMM…YWNS. His130 contacts Zn(2+). Glu131 is an active-site residue. His134 is a Zn(2+) binding site. Transmembrane regions (helical) follow at residues 145–165 and 173–193; these read ITAT…FFGG and PLGF…AMLV. Glu202 contacts Zn(2+). The interval 281–320 is disordered; sequence GGMNVSTPPVRAANPSRKSRSVPDTGLGRGGSQPPKGPWS.

This sequence belongs to the peptidase M48B family. Zn(2+) is required as a cofactor.

It is found in the cell inner membrane. This chain is Protease HtpX homolog, found in Rhizobium leguminosarum bv. trifolii (strain WSM2304).